A 99-amino-acid polypeptide reads, in one-letter code: Prostate and testis expressed protein 4 (99 aa).

An N-terminal signal peptide occupies residues M1–G23. Positions L24–F99 constitute a UPAR/Ly6 domain. Cystine bridges form between C26-C52, C29-C37, C44-C70, and C74-C90.

As to expression, expressed in prostate, testis, eye, kidney and skeletal muscle. Expressed in the dorsal lobe of prostate. Not expressed in the ventral lobe of prostate.

It is found in the secreted. Enhances sperm motility. Binds to calmodulin and inhibits calcium transport into spermatozoa. May modulate the function of nicotinic acetylcholine receptors. The chain is Prostate and testis expressed protein 4 (Pate4) from Mus musculus (Mouse).